A 518-amino-acid polypeptide reads, in one-letter code: Probable G-protein coupled receptor Mth-like 2 (518 aa).

The N-terminal stretch at 1 to 26 (MIASSKMLLSASILIYFLLNLQSSSA) is a signal peptide. The Extracellular portion of the chain corresponds to 27-220 (EIADCSFYDT…CLILPSRTGQ (194 aa)). 5 disulfide bridges follow: C31–C85, C87–C92, C96–C190, C97–C108, and C152–C211. N47 is a glycosylation site (N-linked (GlcNAc...) asparagine). N111, N125, and N201 each carry an N-linked (GlcNAc...) asparagine glycan. A helical transmembrane segment spans residues 221–241 (TVVMITSLICLVLTIAVYLCV). Residues 242–250 (KKLMNLEGK) lie on the Cytoplasmic side of the membrane. The chain crosses the membrane as a helical span at residues 251-271 (CFICYMMCLFFGYLFLLLDLW). Over 272 to 279 (ELSLDFCK) the chain is Extracellular. The chain crosses the membrane as a helical span at residues 280 to 300 (AAGFLGYFFVMAAFFWLSIIS). Over 301 to 321 (RHYWKCLTNPCASMNIRSERA) the chain is Cytoplasmic. Residues 322-342 (FLLYSCFAWAMPLALTGVTYL) form a helical membrane-spanning segment. The Extracellular portion of the chain corresponds to 343–371 (ADNVVNNEEWQPRVGDEGHCWIYTKSWSA). The chain crosses the membrane as a helical span at residues 372 to 392 (MVYFYGPMVLLILFNITMFVL). Topologically, residues 393–426 (TAKHIIDSKRTLRKIARNEGRIQKLNSDKQNYTQ) are cytoplasmic. The chain crosses the membrane as a helical span at residues 427 to 447 (FLLLFTVMGMSWSFEIFSYLV). Residues 448 to 455 (QREKLWVN) are Extracellular-facing. The helical transmembrane segment at 456-476 (IFLVADYFNWSQGVIIFVLFI) threads the bilayer. Topologically, residues 477–518 (LRRKTLVLFKKQIFPKQRAFSRSATQSTIESISQTKRHFNMT) are cytoplasmic.

This sequence belongs to the G-protein coupled receptor 2 family. Mth subfamily.

It localises to the cell membrane. This Drosophila melanogaster (Fruit fly) protein is Probable G-protein coupled receptor Mth-like 2 (mthl2).